The sequence spans 546 residues: Tyrosine-protein kinase yes (546 aa).

The span at 1 to 18 (MGCVKSKEDKGPTQKYRP) shows a compositional bias: basic and acidic residues. The disordered stretch occupies residues 1–58 (MGCVKSKEDKGPTQKYRPDPTNPTPGSHMGLYGPDPTQMGQSPALKGPTNNYNSRSSG). Glycine 2 carries N-myristoyl glycine lipidation. The S-palmitoyl cysteine; in membrane form moiety is linked to residue cysteine 3. Polar residues predominate over residues 48-58 (PTNNYNSRSSG). One can recognise an SH3 domain in the interval 94–155 (GGVTFFVALY…PSNYVAPADS (62 aa)). The SH2 domain maps to 161-258 (WYFGKMGRKD…GLCYRLTTVC (98 aa)). In terms of domain architecture, Protein kinase spans 280 to 533 (LRLELKLGQG…YIQSFLEDYF (254 aa)). Residues 286–294 (LGQGCFGEV) and lysine 308 each bind ATP. The active-site Proton acceptor is the aspartate 399. Tyrosine 429 is subject to Phosphotyrosine; by autocatalysis. Tyrosine 540 carries the phosphotyrosine; by CSK modification.

It belongs to the protein kinase superfamily. Tyr protein kinase family. SRC subfamily. In terms of processing, autophosphorylation at Tyr-429 maintains enzyme activity. Palmitoylation at Cys-3 promotes membrane localization. Widely expressed.

It is found in the cell membrane. It localises to the cytoplasm. Its subcellular location is the cytoskeleton. The protein resides in the microtubule organizing center. The protein localises to the centrosome. It is found in the cytosol. It localises to the cell junction. It catalyses the reaction L-tyrosyl-[protein] + ATP = O-phospho-L-tyrosyl-[protein] + ADP + H(+). Functionally, non-receptor protein tyrosine kinase that is involved in the regulation of cell growth and survival, apoptosis, cell-cell adhesion, cytoskeleton remodeling, differentiation, G2/M progression and cytokinesis. Required for convergent extension cell movements during gastrulation, acting with fyna via rhoa. May be required for epiboly to occur, possibly through its effects in calcium signaling. During embryonic development, phosphorylates ptk2.1/fak. This chain is Tyrosine-protein kinase yes (yes1), found in Danio rerio (Zebrafish).